The sequence spans 146 residues: Large-conductance mechanosensitive channel (146 aa).

2 helical membrane-spanning segments follow: residues 15–35 (VSLA…TSLV) and 81–101 (GIFI…FIII).

Belongs to the MscL family. As to quaternary structure, homopentamer.

It localises to the cell membrane. Functionally, channel that opens in response to stretch forces in the membrane lipid bilayer. May participate in the regulation of osmotic pressure changes within the cell. In Clostridium beijerinckii (strain ATCC 51743 / NCIMB 8052) (Clostridium acetobutylicum), this protein is Large-conductance mechanosensitive channel.